We begin with the raw amino-acid sequence, 467 residues long: Histone acetyltransferase type B catalytic subunit (467 aa).

The tract at residues 1 to 24 is disordered; it reads MVQKQQASAGPGTEPKKRRRVGFS. Acetyl-CoA-binding positions include 249-251 and 256-262; these read ILV and QGKGLGS. Glu283 functions as the Proton donor/acceptor in the catalytic mechanism.

It belongs to the HAT1 family.

It localises to the nucleus. The protein resides in the cytoplasm. The enzyme catalyses L-lysyl-[protein] + acetyl-CoA = N(6)-acetyl-L-lysyl-[protein] + CoA + H(+). Its function is as follows. Acetylates soluble but not nucleosomal H4. Acetylates 'Lys-12' of histone H4. The chain is Histone acetyltransferase type B catalytic subunit (HAG2) from Arabidopsis thaliana (Mouse-ear cress).